The chain runs to 268 residues: Energy-coupling factor transporter transmembrane protein EcfT (268 aa).

5 consecutive transmembrane segments (helical) span residues 29 to 49, 75 to 95, 107 to 127, 152 to 172, and 242 to 262; these read VFIFLVFMFMTRDPLLLTVAV, IIIVLTFVLHLFMTGGGEVIV, LIEGFMLAMKLAMIITIASLL, LPTHELALMMSIALRFIPTLI, and WGLKDSVVLAVFLLFAAAVMA.

This sequence belongs to the energy-coupling factor EcfT family. In terms of assembly, forms a stable energy-coupling factor (ECF) transporter complex composed of 2 membrane-embedded substrate-binding proteins (S component), 2 ATP-binding proteins (A component) and 2 transmembrane proteins (T component). May be able to interact with more than 1 S component at a time.

The protein localises to the cell membrane. In terms of biological role, transmembrane (T) component of an energy-coupling factor (ECF) ABC-transporter complex. Unlike classic ABC transporters this ECF transporter provides the energy necessary to transport a number of different substrates. The chain is Energy-coupling factor transporter transmembrane protein EcfT from Bacillus selenitireducens (strain ATCC 700615 / DSM 15326 / MLS10).